We begin with the raw amino-acid sequence, 469 residues long: MSSRTLYDKVWNFHQVKELPGGSTQLFIGLHLIHEVTSPQAFSALNEKKLGVKFPNLTVATVDHIVPTSNQQRPFSDPLAEEMLSTLEKNCKTHGIKFHGIGSNSQGVVHVMAPELGLTQPGMTVACGDSHTSTHGAFGAIAFGIGTSQVRDVLASQSLAMNKLKVRRIWVEGELQKGVYAKDLILHIIRHLGVKGGVGFAYEFAGPAIEKLSMEGRMTICNMAIEGGARCGYINPDETTFKYLKGKEHAPKGQEWDKAISWWKSLASDSKATFDDEIQLDGSSIEPTVTWGITPGQGISIKETIPNPEFLPKNEQQIAKDACKYMNLKPDEPIEGQSIDVCFIGSCTNGRLSDLQEASKIVKGNTVADGIRAFVVPGSQKVAKEAKEKGLDKIFLKAGFEWREPGCSMCLAMNPDKLEGRQISASSSNRNFKGRQGSAKGRTLLMSPAMVAAAAINGRVTDVRKFLQE.

Residues Cys347, Cys407, and Cys410 each coordinate [4Fe-4S] cluster.

It belongs to the aconitase/IPM isomerase family. LeuC type 1 subfamily. As to quaternary structure, heterodimer of LeuC and LeuD. [4Fe-4S] cluster serves as cofactor.

It carries out the reaction (2R,3S)-3-isopropylmalate = (2S)-2-isopropylmalate. The protein operates within amino-acid biosynthesis; L-leucine biosynthesis; L-leucine from 3-methyl-2-oxobutanoate: step 2/4. Functionally, catalyzes the isomerization between 2-isopropylmalate and 3-isopropylmalate, via the formation of 2-isopropylmaleate. In Prochlorococcus marinus (strain NATL1A), this protein is 3-isopropylmalate dehydratase large subunit.